Reading from the N-terminus, the 253-residue chain is Tryptophan synthase alpha chain (253 aa).

Residues glutamate 46 and aspartate 57 each act as proton acceptor in the active site.

Belongs to the TrpA family. In terms of assembly, tetramer of two alpha and two beta chains.

The catalysed reaction is (1S,2R)-1-C-(indol-3-yl)glycerol 3-phosphate + L-serine = D-glyceraldehyde 3-phosphate + L-tryptophan + H2O. The protein operates within amino-acid biosynthesis; L-tryptophan biosynthesis; L-tryptophan from chorismate: step 5/5. The alpha subunit is responsible for the aldol cleavage of indoleglycerol phosphate to indole and glyceraldehyde 3-phosphate. The chain is Tryptophan synthase alpha chain from Dictyoglomus turgidum (strain DSM 6724 / Z-1310).